We begin with the raw amino-acid sequence, 381 residues long: Succinyl-diaminopimelate desuccinylase 1 (381 aa).

Residue His70 participates in Zn(2+) binding. The active site involves Asp72. Asp103 is a Zn(2+) binding site. The Proton acceptor role is filled by Glu136. Residues Glu137, Glu165, and His354 each contribute to the Zn(2+) site.

It belongs to the peptidase M20A family. DapE subfamily. In terms of assembly, homodimer. Zn(2+) serves as cofactor. The cofactor is Co(2+).

It carries out the reaction N-succinyl-(2S,6S)-2,6-diaminopimelate + H2O = (2S,6S)-2,6-diaminopimelate + succinate. It participates in amino-acid biosynthesis; L-lysine biosynthesis via DAP pathway; LL-2,6-diaminopimelate from (S)-tetrahydrodipicolinate (succinylase route): step 3/3. Functionally, catalyzes the hydrolysis of N-succinyl-L,L-diaminopimelic acid (SDAP), forming succinate and LL-2,6-diaminopimelate (DAP), an intermediate involved in the bacterial biosynthesis of lysine and meso-diaminopimelic acid, an essential component of bacterial cell walls. In Ruegeria sp. (strain TM1040) (Silicibacter sp.), this protein is Succinyl-diaminopimelate desuccinylase 1.